We begin with the raw amino-acid sequence, 136 residues long: Protein PsiE homolog (136 aa).

4 helical membrane passes run Ala15–Leu35, Val58–Phe78, His83–Ile103, and Pro108–Cys128.

Belongs to the PsiE family.

Its subcellular location is the cell inner membrane. The chain is Protein PsiE homolog from Klebsiella pneumoniae (strain 342).